The chain runs to 347 residues: NADH-ubiquinone oxidoreductase chain 2 (347 aa).

11 helical membrane passes run 1–21 (MNPM…SIVL), 25–45 (HWFL…PVLM), 68–88 (MILV…TIMI), 96–116 (MLIT…FWVP), 122–142 (VSLS…LSLL), 145–165 (IFPS…IMIG), 178–198 (IMAY…IYNP), 201–221 (SLLN…LLII), 239–259 (IVVS…PLTG), 274–294 (SSVM…FFYM), and 326–346 (MMSL…LITL).

Belongs to the complex I subunit 2 family. As to quaternary structure, core subunit of respiratory chain NADH dehydrogenase (Complex I) which is composed of 45 different subunits. Interacts with TMEM242.

The protein localises to the mitochondrion inner membrane. It carries out the reaction a ubiquinone + NADH + 5 H(+)(in) = a ubiquinol + NAD(+) + 4 H(+)(out). Functionally, core subunit of the mitochondrial membrane respiratory chain NADH dehydrogenase (Complex I) which catalyzes electron transfer from NADH through the respiratory chain, using ubiquinone as an electron acceptor. Essential for the catalytic activity and assembly of complex I. The protein is NADH-ubiquinone oxidoreductase chain 2 of Sylvisorex lunaris (Moon forest shrew).